Here is a 364-residue protein sequence, read N- to C-terminus: Dual-specificity RNA methyltransferase RlmN (364 aa).

Glu91 (proton acceptor) is an active-site residue. The 237-residue stretch at 97-333 (EDDRGTLCVS…VTVRKTRGDD (237 aa)) folds into the Radical SAM core domain. A disulfide bridge connects residues Cys104 and Cys338. The [4Fe-4S] cluster site is built by Cys111, Cys115, and Cys118. Residues 164–165 (GE), Ser196, 218–220 (SLH), and Asn295 each bind S-adenosyl-L-methionine. The active-site S-methylcysteine intermediate is Cys338.

Belongs to the radical SAM superfamily. RlmN family. It depends on [4Fe-4S] cluster as a cofactor.

The protein resides in the cytoplasm. It catalyses the reaction adenosine(2503) in 23S rRNA + 2 reduced [2Fe-2S]-[ferredoxin] + 2 S-adenosyl-L-methionine = 2-methyladenosine(2503) in 23S rRNA + 5'-deoxyadenosine + L-methionine + 2 oxidized [2Fe-2S]-[ferredoxin] + S-adenosyl-L-homocysteine. It carries out the reaction adenosine(37) in tRNA + 2 reduced [2Fe-2S]-[ferredoxin] + 2 S-adenosyl-L-methionine = 2-methyladenosine(37) in tRNA + 5'-deoxyadenosine + L-methionine + 2 oxidized [2Fe-2S]-[ferredoxin] + S-adenosyl-L-homocysteine. Functionally, specifically methylates position 2 of adenine 2503 in 23S rRNA and position 2 of adenine 37 in tRNAs. m2A2503 modification seems to play a crucial role in the proofreading step occurring at the peptidyl transferase center and thus would serve to optimize ribosomal fidelity. In Chromobacterium violaceum (strain ATCC 12472 / DSM 30191 / JCM 1249 / CCUG 213 / NBRC 12614 / NCIMB 9131 / NCTC 9757 / MK), this protein is Dual-specificity RNA methyltransferase RlmN.